The chain runs to 310 residues: Homoserine kinase (310 aa).

91-101 provides a ligand contact to ATP; it reads PIGSGLGSSAC.

It belongs to the GHMP kinase family. Homoserine kinase subfamily.

It localises to the cytoplasm. It catalyses the reaction L-homoserine + ATP = O-phospho-L-homoserine + ADP + H(+). The protein operates within amino-acid biosynthesis; L-threonine biosynthesis; L-threonine from L-aspartate: step 4/5. In terms of biological role, catalyzes the ATP-dependent phosphorylation of L-homoserine to L-homoserine phosphate. The protein is Homoserine kinase of Escherichia coli O6:K15:H31 (strain 536 / UPEC).